A 138-amino-acid polypeptide reads, in one-letter code: Cysteine desulfuration protein SufE (138 aa).

Cysteine 51 functions as the Cysteine persulfide intermediate in the catalytic mechanism.

It belongs to the SufE family. As to quaternary structure, homodimer. Interacts with SufS.

Its subcellular location is the cytoplasm. The protein operates within cofactor biosynthesis; iron-sulfur cluster biosynthesis. Participates in cysteine desulfuration mediated by SufS. Cysteine desulfuration mobilizes sulfur from L-cysteine to yield L-alanine and constitutes an essential step in sulfur metabolism for biosynthesis of a variety of sulfur-containing biomolecules. Functions as a sulfur acceptor for SufS, by mediating the direct transfer of the sulfur atom from the S-sulfanylcysteine of SufS, an intermediate product of cysteine desulfuration process. The sequence is that of Cysteine desulfuration protein SufE from Pectobacterium atrosepticum (strain SCRI 1043 / ATCC BAA-672) (Erwinia carotovora subsp. atroseptica).